Consider the following 273-residue polypeptide: Type III pantothenate kinase (273 aa).

ATP is bound at residue 7 to 14 (DVGNTAIK). Substrate is bound by residues Phe119 and 124-127 (GIDR). Asp126 acts as the Proton acceptor in catalysis. Asp146 contacts K(+). Residue Thr149 participates in ATP binding. Substrate is bound at residue Thr206.

The protein belongs to the type III pantothenate kinase family. As to quaternary structure, homodimer. It depends on NH4(+) as a cofactor. K(+) serves as cofactor.

Its subcellular location is the cytoplasm. It carries out the reaction (R)-pantothenate + ATP = (R)-4'-phosphopantothenate + ADP + H(+). Its pathway is cofactor biosynthesis; coenzyme A biosynthesis; CoA from (R)-pantothenate: step 1/5. In terms of biological role, catalyzes the phosphorylation of pantothenate (Pan), the first step in CoA biosynthesis. This is Type III pantothenate kinase from Rhodopirellula baltica (strain DSM 10527 / NCIMB 13988 / SH1).